Reading from the N-terminus, the 468-residue chain is Interleukin-9 receptor (468 aa).

A signal peptide spans 1–37 (MALGRCIAEGWTLERVAVKQVSWFLIYSWVCSGVCRG). Topologically, residues 38 to 270 (VSVPEQGGGG…GLLVPRWQWS (233 aa)) are extracellular. 2 N-linked (GlcNAc...) asparagine glycosylation sites follow: Asn-116 and Asn-155. In terms of domain architecture, Fibronectin type-III spans 148–256 (PPSDLQSNVS…WSQPVSFPSP (109 aa)). The WSXWS motif motif lies at 244 to 248 (WSEWS). Residues 271 to 291 (ASILVVVPIFLLLTGFVHLLF) form a helical membrane-spanning segment. At 292–468 (KLSPRLKRIF…PVALPVSSRA (177 aa)) the chain is on the cytoplasmic side. Residues 301-309 (FYQNIPSPE) carry the Box 1 motif motif. A disordered region spans residues 407 to 426 (PQEDWAPLGSARPPPPDSDS).

The protein belongs to the type I cytokine receptor family. Type 4 subfamily. As to quaternary structure, interacts with IL9.

It is found in the cell membrane. The protein localises to the secreted. In terms of biological role, plays an important role in the immune response against parasites by acting as a receptor of IL9. The chain is Interleukin-9 receptor (Il9r) from Mus musculus (Mouse).